A 211-amino-acid polypeptide reads, in one-letter code: Large ribosomal subunit protein bL9 (211 aa).

A disordered region spans residues 180-211; sequence DDIGAAGMDDDDDDAPAPAQADPSSEESSEED.

Belongs to the bacterial ribosomal protein bL9 family.

In terms of biological role, binds to the 23S rRNA. The chain is Large ribosomal subunit protein bL9 from Jannaschia sp. (strain CCS1).